Reading from the N-terminus, the 907-residue chain is Protein translocase subunit SecA (907 aa).

Residues Gln87, 105 to 109, and Asp510 contribute to the ATP site; that span reads GEGKT. Zn(2+)-binding residues include Cys892, Cys894, Cys903, and His904.

The protein belongs to the SecA family. Monomer and homodimer. Part of the essential Sec protein translocation apparatus which comprises SecA, SecYEG and auxiliary proteins SecDF-YajC and YidC. Zn(2+) is required as a cofactor.

It localises to the cell inner membrane. The protein resides in the cytoplasm. The catalysed reaction is ATP + H2O + cellular proteinSide 1 = ADP + phosphate + cellular proteinSide 2.. In terms of biological role, part of the Sec protein translocase complex. Interacts with the SecYEG preprotein conducting channel. Has a central role in coupling the hydrolysis of ATP to the transfer of proteins into and across the cell membrane, serving both as a receptor for the preprotein-SecB complex and as an ATP-driven molecular motor driving the stepwise translocation of polypeptide chains across the membrane. The polypeptide is Protein translocase subunit SecA (Acinetobacter baumannii (strain AB0057)).